The chain runs to 710 residues: MSKQTFTTTFAGKPLVVEVGQVAKQANGATVVRYGDSTVLTAAVMSKKMATGDFFPLQVNYEEKMYAAGKFPGGFMKREGRPSTDATLTARLIDRPIRPMFAEGFRNEVQVINTVLSYDENASAPVAAMFGSSLALSISDIPFNGPIAGVQVGYIDGEFIINPDKEQMEASLLELTVAGSKEAINMVESGAKELSEDIMLEALLKGHQAIQELIAFQEQIVAVVGKEKAEVELLQVDADLQADIVAKYNAQLQKAVQVEEKKAREAATEAVKEMVKAEYEERYAEDENLATIMRDVAEILEQMEHAEVRRLITEDKIRPDGRKIDEIRPLDAVVDFLPKVHGSGLFTRGQTQALSVLTLAPMGETQIIDGLAPEYKKRFLHHYNFPQYSVGETGRYGAAGRREIGHGALGERALEQVLPSLEEFPYAIRLVAEVLESNGSSSQASICAGTLALMAGGVPIKAPVAGIAMGLISDGTNYTVLTDIQGLEDHFGDMDFKVAGTREGITALQMDIKIAGITPQILEEALAQAKKARFEILDVIEATIAEPRPELAPTAPKIDTIKIDVDKIKVVIGKGGETIDKIIAETGVKIDIDDEGNVSIYSSDQAAIDRTKEIIAGLVREAKVGEVYHAKVIRIEKFGAFVNLFDKTDALVHISEIAWTRTANVSDVLEVGEDVDVKVIKIDEKGRVDASMKALIPRPPKPEKKEEKHD.

Mg(2+) is bound by residues D489 and D495. The 60-residue stretch at 556–615 (PKIDTIKIDVDKIKVVIGKGGETIDKIIAETGVKIDIDDEGNVSIYSSDQAAIDRTKEII) folds into the KH domain. Residues 625–693 (GEVYHAKVIR…EKGRVDASMK (69 aa)) enclose the S1 motif domain. Residues 691-710 (SMKALIPRPPKPEKKEEKHD) are disordered. The span at 700–710 (PKPEKKEEKHD) shows a compositional bias: basic and acidic residues.

This sequence belongs to the polyribonucleotide nucleotidyltransferase family. Mg(2+) is required as a cofactor.

It localises to the cytoplasm. The catalysed reaction is RNA(n+1) + phosphate = RNA(n) + a ribonucleoside 5'-diphosphate. In terms of biological role, involved in mRNA degradation. Catalyzes the phosphorolysis of single-stranded polyribonucleotides processively in the 3'- to 5'-direction. In Streptococcus pyogenes serotype M4 (strain MGAS10750), this protein is Polyribonucleotide nucleotidyltransferase.